Here is a 147-residue protein sequence, read N- to C-terminus: MVAQRVFWAAKTLQEMSPDEFESLCDGCGKCCLHKLEDEDTGDVYYTNVACRHLDHDRCRCTRYDQRQQLVAECVVLTPDSVRDTYWLPETCAYRLVDQGLPLFDWHPLISGDPDSVHTAGMSVAGKVVAENTVALDDLEDYIVRWV.

It belongs to the UPF0260 family.

The polypeptide is UPF0260 protein CJA_2436 (Cellvibrio japonicus (strain Ueda107) (Pseudomonas fluorescens subsp. cellulosa)).